Here is a 1102-residue protein sequence, read N- to C-terminus: Probable leucine-rich repeat receptor-like protein kinase At5g63930 (1102 aa).

Positions 1–26 (MVKEMMKLAVFFISLLLILLISETTG) are cleaved as a signal peptide. Residues 27–737 (LNLEGQYLLE…GKPGGMRSSK (711 aa)) are Extracellular-facing. N-linked (GlcNAc...) asparagine glycosylation is found at Asn54, Asn68, Asn79, and Asn119. 26 LRR repeats span residues 72 to 96 (DPEV…IGGL), 97 to 120 (VHLK…IGNC), 122 to 144 (SLEI…IGKL), 145 to 170 (VSLE…NLLS), 172 to 192 (SQLV…IGNL), 193 to 216 (KRLT…IGGC), 217 to 241 (ESLV…GMLK), 243 to 264 (LSQV…ISNC), 265 to 288 (TSLE…LGDL), 289 to 312 (QSLE…IGNL), 314 to 336 (YAIE…LGNI), 337 to 360 (EGLE…LSTL), 361 to 383 (KNLS…GFQY), 385 to 408 (RGLF…LGWY), 409 to 432 (SDLW…LCLH), 433 to 456 (SNMI…ITTC), 458 to 480 (TLVQ…LCKQ), 481 to 504 (VNVT…VGNC), 505 to 528 (SALQ…IGML), 529 to 552 (SQLG…IFNC), 554 to 576 (MLQR…VGSL), 577 to 602 (YQLE…NLSR), 604 to 624 (TELQ…LGSL), 625 to 649 (TGLQ…LSNL), 651 to 672 (MLEF…SFAN), and 674 to 700 (SSLL…SMSS). N-linked (GlcNAc...) asparagine glycosylation occurs at Asn180. Asn263 is a glycosylation site (N-linked (GlcNAc...) asparagine). Asn302 and Asn311 each carry an N-linked (GlcNAc...) asparagine glycan. An N-linked (GlcNAc...) asparagine glycan is attached at Asn362. A glycan (N-linked (GlcNAc...) asparagine) is linked at Asn444. 2 N-linked (GlcNAc...) asparagine glycosylation sites follow: Asn482 and Asn503. N-linked (GlcNAc...) asparagine glycosylation is found at Asn535, Asn564, Asn588, Asn599, Asn614, Asn632, Asn661, Asn672, Asn680, and Asn695. Residues 738-758 (IIAITAAVIGGVSLMLIALIV) form a helical membrane-spanning segment. Residues 759–1102 (YLMRRPVRTV…TEELTQTTTP (344 aa)) are Cytoplasmic-facing. Residues Thr793 and Thr801 each carry the phosphothreonine modification. A Protein kinase domain is found at 804–1091 (FDESFVVGRG…ERSEGEQEHL (288 aa)). Residues 810–818 (VGRGACGTV) and Lys832 contribute to the ATP site. Phosphotyrosine is present on residues Tyr882 and Tyr919. Asp932 (proton acceptor) is an active-site residue. Ser966 bears the Phosphoserine mark. 2 positions are modified to phosphotyrosine: Tyr974 and Tyr981. Thr982 carries the post-translational modification Phosphothreonine.

This sequence belongs to the protein kinase superfamily. Ser/Thr protein kinase family.

It localises to the cell membrane. It catalyses the reaction L-seryl-[protein] + ATP = O-phospho-L-seryl-[protein] + ADP + H(+). The catalysed reaction is L-threonyl-[protein] + ATP = O-phospho-L-threonyl-[protein] + ADP + H(+). This Arabidopsis thaliana (Mouse-ear cress) protein is Probable leucine-rich repeat receptor-like protein kinase At5g63930.